The chain runs to 275 residues: Bis(5'-nucleosyl)-tetraphosphatase, symmetrical (275 aa).

This sequence belongs to the Ap4A hydrolase family.

The catalysed reaction is P(1),P(4)-bis(5'-adenosyl) tetraphosphate + H2O = 2 ADP + 2 H(+). Hydrolyzes diadenosine 5',5'''-P1,P4-tetraphosphate to yield ADP. The chain is Bis(5'-nucleosyl)-tetraphosphatase, symmetrical (apaH) from Aggregatibacter actinomycetemcomitans (Actinobacillus actinomycetemcomitans).